The chain runs to 668 residues: UvrABC system protein B (668 aa).

Residues 36–276 (DNIKGGEKAQ…EEAIKNIMEE (241 aa)) enclose the Helicase ATP-binding domain. 49–56 (GATGTGKT) contributes to the ATP binding site. Residues 102–125 (YYDYYQPEAYVPSSDTYIEKDSSV) carry the Beta-hairpin motif. Residues 440–606 (QMDDLLGEIN…TIKKEIRDLI (167 aa)) form the Helicase C-terminal domain. The region spanning 632-667 (QEAIKKLQKQMHEAAELLDFELAAQIRDMVLELKSM) is the UVR domain.

The protein belongs to the UvrB family. Forms a heterotetramer with UvrA during the search for lesions. Interacts with UvrC in an incision complex.

It is found in the cytoplasm. Functionally, the UvrABC repair system catalyzes the recognition and processing of DNA lesions. A damage recognition complex composed of 2 UvrA and 2 UvrB subunits scans DNA for abnormalities. Upon binding of the UvrA(2)B(2) complex to a putative damaged site, the DNA wraps around one UvrB monomer. DNA wrap is dependent on ATP binding by UvrB and probably causes local melting of the DNA helix, facilitating insertion of UvrB beta-hairpin between the DNA strands. Then UvrB probes one DNA strand for the presence of a lesion. If a lesion is found the UvrA subunits dissociate and the UvrB-DNA preincision complex is formed. This complex is subsequently bound by UvrC and the second UvrB is released. If no lesion is found, the DNA wraps around the other UvrB subunit that will check the other stand for damage. In Streptococcus thermophilus (strain ATCC BAA-491 / LMD-9), this protein is UvrABC system protein B.